The sequence spans 600 residues: Terpenoid synthase 8 (600 aa).

Mg(2+) contacts are provided by Asp-352, Asp-356, Asn-497, and Asp-505. Residues 352–356 (DDTCD) carry the DDXXD motif motif.

It belongs to the terpene synthase family. Tpsa subfamily. Mg(2+) serves as cofactor. Mn(2+) is required as a cofactor. As to expression, stele, and tips of primary and secondary root.

The protein resides in the plastid. It catalyses the reaction (2E,6E,10E)-geranylgeranyl diphosphate = rhizathalene A + diphosphate. Its pathway is secondary metabolite biosynthesis; terpenoid biosynthesis. Its function is as follows. Catalyzes the synthesis of the semivolatile diterpene rhizatalene A. The polypeptide is Terpenoid synthase 8 (TPS08) (Arabidopsis thaliana (Mouse-ear cress)).